Reading from the N-terminus, the 529-residue chain is MDDEYMSLEEEEDNCYPSEFDDHDQMCSNAEESDLQHSREPTSQVITKEALVAAQKEVLVKVMEFLSVTENQARTLLIQYQWNVDKLFSVYTDQGKDVLFSRAGLTVFDPSLTKKTMKCDICMEEDLSKYAMTRMECGHRFCNDCWKEHFTVRINEGEGKRIRCMAYKCNTICDEARQLVSTELAEKFDRFLIESYVEDNNMVKWCPSTPHCGNAIRNIKDDGDVDEVECSCGLQFCFSCLSESHSPCSCLMWKLWKKKCEDESETVNWMTVNTKLCPKCSKPIQKRDGCNHMTCKCGQHFCWLCGQATGRDHSYSSIAGHSCGRYKEEKVRQLERAQRDLDRYTHYHYRYKAHIDSLKLEDKLKKSILKKAVLNSETKDQKVFKEYSWIIDAVNRLFRSRRILSYSYPFVFYMFGKELFKDDMSDEERNIKKNLFEDQQQQLEGNVERLSKILEEPFDEYDHEKVVEMMRHLTNLTAVVDNLCKEMYECIENELLGPLISGIHNIAPYRSKGIEQAAEFSASSACGSS.

The segment covering 1–22 (MDDEYMSLEEEEDNCYPSEFDD) has biased composition (acidic residues). The interval 1–23 (MDDEYMSLEEEEDNCYPSEFDDH) is disordered. Positions 115-327 (KTMKCDICME…IAGHSCGRYK (213 aa)) are TRIAD supradomain. 18 residues coordinate Zn(2+): cysteine 119, cysteine 122, cysteine 137, histidine 139, cysteine 142, cysteine 145, cysteine 164, cysteine 169, cysteine 206, cysteine 212, cysteine 230, cysteine 232, cysteine 237, cysteine 240, histidine 245, cysteine 250, cysteine 277, and cysteine 280. Residues 119–169 (CDICMEEDLSKYAMTRMECGHRFCNDCWKEHFTVRINEGEGKRIRCMAYKC) form an RING-type 1 zinc finger. The segment at 186-250 (EKFDRFLIES…LSESHSPCSC (65 aa)) adopts an IBR-type zinc-finger fold. The RING-type 2; atypical zinc finger occupies 277–305 (CPKCSKPIQKRDGCNHMTCKCGQHFCWLC). The active site involves cysteine 290. Zn(2+) is bound by residues cysteine 295, cysteine 297, cysteine 302, cysteine 305, histidine 313, and cysteine 323.

The protein belongs to the RBR family. Ariadne subfamily. Requires Zn(2+) as cofactor.

The catalysed reaction is [E2 ubiquitin-conjugating enzyme]-S-ubiquitinyl-L-cysteine + [acceptor protein]-L-lysine = [E2 ubiquitin-conjugating enzyme]-L-cysteine + [acceptor protein]-N(6)-ubiquitinyl-L-lysine.. It participates in protein modification; protein ubiquitination. Its function is as follows. Might act as an E3 ubiquitin-protein ligase, or as part of E3 complex, which accepts ubiquitin from specific E2 ubiquitin-conjugating enzymes and then transfers it to substrates. This chain is Putative E3 ubiquitin-protein ligase ARI4 (ARI4), found in Arabidopsis thaliana (Mouse-ear cress).